The chain runs to 177 residues: Ribulose bisphosphate carboxylase small subunit, chloroplastic 6 (177 aa).

A chloroplast-targeting transit peptide spans 1–56 (MASSMMASTAAVARVGPAQTNMVAPFNGLRSSVAFPATRKANNDLSTLPSNGGRVS).

This sequence belongs to the RuBisCO small chain family. As to quaternary structure, heterohexadecamer of 8 large and 8 small subunits.

The protein localises to the plastid. It is found in the chloroplast. Functionally, ruBisCO catalyzes two reactions: the carboxylation of D-ribulose 1,5-bisphosphate, the primary event in carbon dioxide fixation, as well as the oxidative fragmentation of the pentose substrate. Both reactions occur simultaneously and in competition at the same active site. Although the small subunit is not catalytic it is essential for maximal activity. The protein is Ribulose bisphosphate carboxylase small subunit, chloroplastic 6 of Lemna gibba (Swollen duckweed).